A 448-amino-acid polypeptide reads, in one-letter code: Probable glycine dehydrogenase (decarboxylating) subunit 1 (448 aa).

This sequence belongs to the GcvP family. N-terminal subunit subfamily. The glycine cleavage system is composed of four proteins: P, T, L and H. In this organism, the P 'protein' is a heterodimer of two subunits.

The enzyme catalyses N(6)-[(R)-lipoyl]-L-lysyl-[glycine-cleavage complex H protein] + glycine + H(+) = N(6)-[(R)-S(8)-aminomethyldihydrolipoyl]-L-lysyl-[glycine-cleavage complex H protein] + CO2. Functionally, the glycine cleavage system catalyzes the degradation of glycine. The P protein binds the alpha-amino group of glycine through its pyridoxal phosphate cofactor; CO(2) is released and the remaining methylamine moiety is then transferred to the lipoamide cofactor of the H protein. The sequence is that of Probable glycine dehydrogenase (decarboxylating) subunit 1 from Listeria welshimeri serovar 6b (strain ATCC 35897 / DSM 20650 / CCUG 15529 / CIP 8149 / NCTC 11857 / SLCC 5334 / V8).